Consider the following 44-residue polypeptide: Non-structural protein 7b (44 aa).

A helical membrane pass occupies residues 9 to 29 (FYLCFLAFLLFLVLIMLIIFW).

The protein resides in the host membrane. This is Non-structural protein 7b from Bat coronavirus Rp3/2004 (BtCoV/Rp3/2004).